The sequence spans 100 residues: Urease subunit gamma (100 aa).

It belongs to the urease gamma subunit family. In terms of assembly, probable heterotrimer of UreA (gamma), UreB (beta) and UreC (alpha) subunits. Three heterotrimers associate to form the active enzyme. The trimeric urease interacts with an accessory complex composed of UreD, UreF and UreG, which is required for the assembly of the nickel containing metallocenter of UreC. The UreE protein may also play a direct role in nickel transfer to the urease apoprotein.

It localises to the cytoplasm. The enzyme catalyses urea + 2 H2O + H(+) = hydrogencarbonate + 2 NH4(+). The protein operates within nitrogen metabolism; urea degradation; CO(2) and NH(3) from urea (urease route): step 1/1. In Proteus mirabilis (strain HI4320), this protein is Urease subunit gamma.